The following is a 415-amino-acid chain: Serine hydroxymethyltransferase (415 aa).

(6S)-5,6,7,8-tetrahydrofolate is bound by residues L117 and 121–123 (GHL). At K226 the chain carries N6-(pyridoxal phosphate)lysine. Residues E241 and 349–351 (SPF) each bind (6S)-5,6,7,8-tetrahydrofolate.

The protein belongs to the SHMT family. Homodimer. Requires pyridoxal 5'-phosphate as cofactor.

The protein localises to the cytoplasm. It catalyses the reaction (6R)-5,10-methylene-5,6,7,8-tetrahydrofolate + glycine + H2O = (6S)-5,6,7,8-tetrahydrofolate + L-serine. The protein operates within one-carbon metabolism; tetrahydrofolate interconversion. It participates in amino-acid biosynthesis; glycine biosynthesis; glycine from L-serine: step 1/1. Its function is as follows. Catalyzes the reversible interconversion of serine and glycine with tetrahydrofolate (THF) serving as the one-carbon carrier. This reaction serves as the major source of one-carbon groups required for the biosynthesis of purines, thymidylate, methionine, and other important biomolecules. Also exhibits THF-independent aldolase activity toward beta-hydroxyamino acids, producing glycine and aldehydes, via a retro-aldol mechanism. In Geotalea daltonii (strain DSM 22248 / JCM 15807 / FRC-32) (Geobacter daltonii), this protein is Serine hydroxymethyltransferase.